The chain runs to 167 residues: Periplasmic nitrate reductase, electron transfer subunit (167 aa).

An N-terminal signal peptide occupies residues 1–34 (MRRAHRAGERVMMKRFGIALLAVAIAAGASSLTA). The disordered stretch occupies residues 40 to 65 (GLHGPAPLNDEGPAPPMLPNRNTSER). Heme c is bound by residues His-79, Cys-93, Cys-96, His-97, His-114, Cys-133, Cys-136, and His-137.

It belongs to the NapB family. Component of the periplasmic nitrate reductase NapAB complex composed of NapA and NapB. Binds 2 heme C groups per subunit.

The protein resides in the periplasm. In terms of biological role, electron transfer subunit of the periplasmic nitrate reductase complex NapAB. Receives electrons from the membrane-anchored tetraheme c-type NapC protein and transfers these to NapA subunit, thus allowing electron flow between membrane and periplasm. Essential for periplasmic nitrate reduction with nitrate as the terminal electron acceptor. The protein is Periplasmic nitrate reductase, electron transfer subunit of Bradyrhizobium japonicum.